A 504-amino-acid polypeptide reads, in one-letter code: MEIPRQTEMVELVPNGKHLEGLLPVGMPTADTQRAEDAQHCGEGKGFLQQSSSKEPHFTDFEGKTSFGMSVFNLSNAIMGSGILGLAYAMANTGIILFLFLLTAVALLSSYSIHLLLKSSGIVGIRAYEQLGYRAFGTPGKLAAALAITLQNIGAMSSYLYIIKSELPLVIQTFLNLEKPTPVWYMDGNYLVILVSVIIILPLALMRQLGYLGYSSGFSLSCMVFFLIAVIYKKFQVPCPLAHNLVNATGNFSHMVVVEEKSQLQSEPDTAEAFCTPSYFTLNSQTAYTIPIMAFAFVCHPEVLPIYTELKDPSKRKMQHISNLSIAVMYVMYFLAALFGYLTFYDGVESELLHTYSKVDPFDVLILCVRVAVLIAVTLTVPIVLFPVRRAIQQMLFQNQEFSWLRHVLIATGLLTCINLLVIFAPNILGIFGIIGATSAPCLIFIFPAIFYFRIMPTEKEPVRSTPKILALCFAAVGFLLMTMSLSFIITDWVSGTSQHGGNH.

A Phosphoserine; by PKC modification is found at S52. An N-linked (GlcNAc...) asparagine glycan is attached at N73. 5 helical membrane-spanning segments follow: residues 82–102 (GILGLAYAMANTGIILFLFLL), 105–125 (VALLSSYSIHLLLKSSGIVGI), 143–163 (AAALAITLQNIGAMSSYLYII), 186–206 (MDGNYLVILVSVIIILPLALM), and 212–232 (LGYSSGFSLSCMVFFLIAVIY). C239 and C275 form a disulfide bridge. N-linked (GlcNAc...) asparagine glycans are attached at residues N247 and N251. The helical transmembrane segment at 287–307 (AYTIPIMAFAFVCHPEVLPIY) threads the bilayer. N-linked (GlcNAc...) asparagine glycosylation is present at N323. 5 helical membrane passes run 324–344 (LSIAVMYVMYFLAALFGYLTF), 366–386 (ILCVRVAVLIAVTLTVPIVLF), 408–428 (VLIATGLLTCINLLVIFAPNI), 431–451 (IFGIIGATSAPCLIFIFPAIF), and 469–489 (ILALCFAAVGFLLMTMSLSFI).

This sequence belongs to the amino acid/polyamine transporter 2 family. In terms of processing, phosphorylation at Ser-52 induces internalization and sequestration into an intracellular reservoir. During dephosphorylation by protein phosphatases, can recycle back to the plasma membrane and regain activity. Prolonged phosphorylation results in its degradation. In terms of tissue distribution, highly expressed in liver. Expressed in skeletal muscle. Expressed in kidney, heart and brain. Not detected in gut, lung or spleen. Expressed ubiquitously in hepatocytes in liver whereas in kidney expression is restricted to the medulla. Within brain, expressed in glial cells. In the cerebellum, expressed on Bergmann glial fibers in the molecular layer and astrocytes in the granule layer. Expressed in brain kidney and liver (at protein level). In the adult kidney, highly expressed in the outer strip of the outer medulla and medullary rays penetrating into the kidney cortex (at protein level).

The protein localises to the cell membrane. The protein resides in the basolateral cell membrane. It carries out the reaction L-glutamine(out) + Na(+)(out) + H(+)(in) = L-glutamine(in) + Na(+)(in) + H(+)(out). It catalyses the reaction L-asparagine(out) + Na(+)(out) + H(+)(in) = L-asparagine(in) + Na(+)(in) + H(+)(out). The catalysed reaction is L-histidine(out) + Na(+)(out) + H(+)(in) = L-histidine(in) + Na(+)(in) + H(+)(out). With respect to regulation, L-glutamine efflux and L-glutamine uptake are regulated by CO2/HCO3(-) through SLC4A4 leading to modulation of cytosolic pH and Na(+)concentration. Symporter that cotransports specific neutral amino acids and sodium ions, coupled to an H(+) antiporter activity. Mainly participates in the glutamate-GABA-glutamine cycle in brain where it transports L-glutamine from astrocytes in the intercellular space for the replenishment of both neurotransmitters glutamate and gamma-aminobutyric acid (GABA) in neurons. Also functions as the major influx transporter in ganglion cells mediating the uptake of glutamine. The transport activity is specific for L-glutamine, L-histidine and L-asparagine. The transport is electroneutral coupled to the cotransport of 1 Na(+) and the antiport of 1 H(+), pH dependent, saturable, Li(+) tolerant and functions in both direction depending on the concentration gradients of its substrates and cotransported ions. Also mediates an amino acid-gated H(+) conductance that is not stoichiometrically coupled to the amino acid transport but which influences the ionic gradients that drive the amino acid transport. In addition, may play a role in nitrogen metabolism, amino acid homeostasis, glucose metabolism and renal ammoniagenesis. In Rattus norvegicus (Rat), this protein is Sodium-coupled neutral amino acid transporter 3.